We begin with the raw amino-acid sequence, 319 residues long: FLLRVSPDLEWHVACLKCAECGQPLDETCTCFLRDGKAYCKRDYGRLFGIKCAQCRAAFSSSDLVMRARDHVYHLECFRCAACGRQLLPGDQFCLRERDLLCRADHGPPPDGAAARGPRSPAPPPAHLAEPVPGRPPGPRPQSHKAAEKTTRVRTVLNEKQLHTLRTCYAANPRPDALMKEQLVEMTGLSPRVIRVWFQNKRCKDKKKSILMKQLQQQQHSDKTSLQGLTGTPLVAGSPVRHESAVQGSAVEVQTYQPPWKALSDFALQSDLEPPAAFQQLVSFSESGSLGTSSGSDVTSLSSQLPDTPNSMVPSPAET.

2 consecutive LIM zinc-binding domains span residues 1 to 43 (FLLR…CKRD) and 52 to 106 (CAQC…RADH). 3 disordered regions span residues 106–151 (HGPP…EKTT), 218–237 (QQHS…LVAG), and 286–319 (ESGS…PAET). Residues 150–209 (TTRVRTVLNEKQLHTLRTCYAANPRPDALMKEQLVEMTGLSPRVIRVWFQNKRCKDKKKS) constitute a DNA-binding region (homeobox). Over residues 218 to 230 (QQHSDKTSLQGLT) the composition is skewed to polar residues. Residues 286 to 303 (ESGSLGTSSGSDVTSLSS) are compositionally biased toward low complexity. Polar residues predominate over residues 304–319 (QLPDTPNSMVPSPAET).

It is found in the nucleus. Its function is as follows. Transcriptional factor that defines subclasses of motoneurons that segregate into columns in the spinal cord and select distinct axon pathways. Acts in conjunction with LIM-1, LIM-3 and ISL-1. In Gallus gallus (Chicken), this protein is Insulin gene enhancer protein ISL-2 (ISL2).